The primary structure comprises 239 residues: RING finger protein 151 (239 aa).

The RING-type zinc-finger motif lies at 20–58 (CSVCHGVLKRPTRLPCSHIFCKKCIFRWLARQNTCPCCR). The segment at 101–156 (EHQDSCPFELMACPNEGCTVQVLRGVLDEHRQHCQQNGQQRCPLGCGSTLAALEGE) adopts a TRAF-type zinc-finger fold.

Interacts with DTNBP1. Expressed in testis. Expressed in round spermatids of the stages VII-VIII semniniferous tubules. Expressed in elongating spermatids of stages VIII-IX seminiferous tubules (at protein level).

The protein resides in the cytoplasm. Its subcellular location is the nucleus. In terms of biological role, may be involved in acrosome formation of spermatids. This is RING finger protein 151 (Rnf151) from Mus musculus (Mouse).